The sequence spans 368 residues: tRNA 2-selenouridine synthase (368 aa).

Residues methionine 15 to aspartate 138 enclose the Rhodanese domain. The active-site S-selanylcysteine intermediate is cysteine 98.

This sequence belongs to the SelU family. As to quaternary structure, monomer.

The catalysed reaction is 5-methylaminomethyl-2-thiouridine(34) in tRNA + selenophosphate + (2E)-geranyl diphosphate + H2O + H(+) = 5-methylaminomethyl-2-selenouridine(34) in tRNA + (2E)-thiogeraniol + phosphate + diphosphate. The enzyme catalyses 5-methylaminomethyl-2-thiouridine(34) in tRNA + (2E)-geranyl diphosphate = 5-methylaminomethyl-S-(2E)-geranyl-thiouridine(34) in tRNA + diphosphate. It catalyses the reaction 5-methylaminomethyl-S-(2E)-geranyl-thiouridine(34) in tRNA + selenophosphate + H(+) = 5-methylaminomethyl-2-(Se-phospho)selenouridine(34) in tRNA + (2E)-thiogeraniol. It carries out the reaction 5-methylaminomethyl-2-(Se-phospho)selenouridine(34) in tRNA + H2O = 5-methylaminomethyl-2-selenouridine(34) in tRNA + phosphate. Functionally, involved in the post-transcriptional modification of the uridine at the wobble position (U34) of tRNA(Lys), tRNA(Glu) and tRNA(Gln). Catalyzes the conversion of 2-thiouridine (S2U-RNA) to 2-selenouridine (Se2U-RNA). Acts in a two-step process involving geranylation of 2-thiouridine (S2U) to S-geranyl-2-thiouridine (geS2U) and subsequent selenation of the latter derivative to 2-selenouridine (Se2U) in the tRNA chain. In Shewanella woodyi (strain ATCC 51908 / MS32), this protein is tRNA 2-selenouridine synthase.